A 140-amino-acid chain; its full sequence is Putative pre-16S rRNA nuclease (140 aa).

This sequence belongs to the YqgF nuclease family.

The protein resides in the cytoplasm. Could be a nuclease involved in processing of the 5'-end of pre-16S rRNA. This is Putative pre-16S rRNA nuclease from Pasteurella multocida (strain Pm70).